The primary structure comprises 565 residues: MARPKNVKHIFVTGGVVSSLGKGILSASLGLLLKSRGLRVAIQKYDPYINVDPGTMSPYQHGEVYVTDDGAETDLDLGHYERFLDEPTSQASNLTMGRVYKAVIDKERQGEYLGGTVQVVPHVIDEIKAKMNELAKNANLDVLITEIGGTIGDIESLPFLEAMRQLKLDLGTKNLLNIHLTLVPYIKAACEMKTKPTQHSVKMLLETGIQPDILVCRSEKPLSREIKNKVGHFCNLHEADVIGLSDCETIYGVPIMLLDEQLDKRVLKKLGIKKFQDPELSYWTEFCDKVKHPEDGEVTIAVCGKYTEYPDAYKSILESFVHAGAVNNVKVTVRFIRSEDAEESGCDIATAMKDVHGLLVAPGFGDRGIEGKISFIRYARENNIPFLGICLGMQCATIEFARNVCGLSEANSTEFSKRCRQPVIDLMEHQKKVKEKGGTMRLGSYPCILKEDTIANKAYGKFLINERHRHRYEFNNEYRELLEQNGMLFSGTSPNGDLVEIIEISGHPWFVGVQFHPEYKSRVRSAHPLFVGFVAAAKAFAFGDRQLSFEPDTLPLGEPERTLEG.

An amidoligase domain region spans residues 1–272 (MARPKNVKHI…DKRVLKKLGI (272 aa)). CTP is bound at residue Ser-18. Ser-18 contributes to the UTP binding site. 19–24 (SLGKGI) serves as a coordination point for ATP. An L-glutamine-binding site is contributed by Tyr-59. Asp-76 is a binding site for ATP. 2 residues coordinate Mg(2+): Asp-76 and Glu-146. Residues 153–155 (DIE), 193–198 (KTKPTQ), and Lys-229 each bind CTP. UTP-binding positions include 193–198 (KTKPTQ) and Lys-229. Positions 299 to 543 (TIAVCGKYTE…VAAAKAFAFG (245 aa)) constitute a Glutamine amidotransferase type-1 domain. An L-glutamine-binding site is contributed by Gly-363. The active-site Nucleophile; for glutamine hydrolysis is the Cys-390. L-glutamine is bound by residues 391–394 (LGMQ), Glu-414, and Arg-471. Active-site residues include His-516 and Glu-518.

Belongs to the CTP synthase family. In terms of assembly, homotetramer.

The catalysed reaction is UTP + L-glutamine + ATP + H2O = CTP + L-glutamate + ADP + phosphate + 2 H(+). It carries out the reaction L-glutamine + H2O = L-glutamate + NH4(+). The enzyme catalyses UTP + NH4(+) + ATP = CTP + ADP + phosphate + 2 H(+). It participates in pyrimidine metabolism; CTP biosynthesis via de novo pathway; CTP from UDP: step 2/2. Its activity is regulated as follows. Allosterically activated by GTP, when glutamine is the substrate; GTP has no effect on the reaction when ammonia is the substrate. The allosteric effector GTP functions by stabilizing the protein conformation that binds the tetrahedral intermediate(s) formed during glutamine hydrolysis. Inhibited by the product CTP, via allosteric rather than competitive inhibition. Functionally, catalyzes the ATP-dependent amination of UTP to CTP with either L-glutamine or ammonia as the source of nitrogen. Regulates intracellular CTP levels through interactions with the four ribonucleotide triphosphates. In Chlorobium phaeobacteroides (strain BS1), this protein is CTP synthase.